Reading from the N-terminus, the 842-residue chain is Ionotropic receptor 21a (842 aa).

A signal peptide spans 1 to 15; it reads MSYYWVALVLFTAQA. Asn-325 is a glycosylation site (N-linked (GlcNAc...) asparagine). 2 helical membrane-spanning segments follow: residues 405 to 425 and 437 to 457; these read WPVWVALICVYLGGIFPIVFT and WGEVENMFWYVFGMFTNAFSF. Asn-469 carries N-linked (GlcNAc...) asparagine glycosylation. Residues 479-499 traverse the membrane as a helical segment; that stretch reads WLFTIIITSCYTGSIIAFVTL. N-linked (GlcNAc...) asparagine glycans are attached at residues Asn-533, Asn-558, Asn-583, and Asn-588. A helical membrane pass occupies residues 680 to 700; it reads MFLLMALGYFLGATALVSEIV. The interval 722–745 is disordered; it reads WSSASSGSMLRTNAEQLSHDKRKA. Asn-765 and Asn-797 each carry an N-linked (GlcNAc...) asparagine glycan.

It belongs to the glutamate-gated ion channel (TC 1.A.10.1) family. As to expression, expressed in the dorsal organ cool cells. In the antenna, expressed in approximately six neurons in the arista as well as five to ten neurons near the third chamber of the sacculus.

It localises to the cell membrane. Its function is as follows. Integral part of a neural sensory system in the antenna that provides the neural basis for the response to environmental changes in temperature (thermosensation). Together with Ir25a and Ir93a, mediates the response of the dorsal organ cool cells, a trio of cool-responsive neurons, to cooling and is required for cool avoidance behavior. In Drosophila melanogaster (Fruit fly), this protein is Ionotropic receptor 21a.